The sequence spans 110 residues: Protein RALF-like 4 (110 aa).

The N-terminal stretch at Met-1–Ala-23 is a signal peptide. A propeptide spans Thr-24–Ala-58 (removed in mature form). Cystine bridges form between Cys-76/Cys-86 and Cys-99/Cys-105.

It belongs to the plant rapid alkalinization factor (RALF) family. Proteolytically cleaved, probably by S1P, a subtilisin-like serine protease (subtilase).

It localises to the secreted. In terms of biological role, cell signaling peptide that may regulate plant stress, growth, and development. Mediates a rapid alkalinization of extracellular space by mediating a transient increase in the cytoplasmic Ca(2+) concentration leading to a calcium-dependent signaling events through a cell surface receptor and a concomitant activation of some intracellular mitogen-activated protein kinases. The protein is Protein RALF-like 4 (RALFL4) of Arabidopsis thaliana (Mouse-ear cress).